The primary structure comprises 139 residues: Ribonuclease P protein component (139 aa).

Residues 116–139 (FSKNKSTIGGEYSPKNEQCESELP) form a disordered region.

It belongs to the RnpA family. As to quaternary structure, consists of a catalytic RNA component (M1 or rnpB) and a protein subunit.

It carries out the reaction Endonucleolytic cleavage of RNA, removing 5'-extranucleotides from tRNA precursor.. Its function is as follows. RNaseP catalyzes the removal of the 5'-leader sequence from pre-tRNA to produce the mature 5'-terminus. It can also cleave other RNA substrates such as 4.5S RNA. The protein component plays an auxiliary but essential role in vivo by binding to the 5'-leader sequence and broadening the substrate specificity of the ribozyme. This is Ribonuclease P protein component from Chlamydia abortus (strain DSM 27085 / S26/3) (Chlamydophila abortus).